A 624-amino-acid polypeptide reads, in one-letter code: MLSRVARYSRTLNQLTRTSQGGLLSAVLRTSIRQNSTDSPPSNSANEIYTKLSDTKDPQRNQFFQYTWGSWLTNDKSKKKQRETTFSIEGLTLFIDRINQLESKLGQPKSLEGAFVLTNNKELLGSTKEKVIVRSIASIHEGKHHRVYKITLNTGKDLVLRIPYKLDSDAAIASKLKSEVATIDFLKLKLGLNVPRVLAYGVDSNNELKSPFILQEFISGELLMKKWHPLLPDSEETNKNLHEVIDPIAQFQDKILSVTFKKFGSLYFHDDVEGSLQNDVPYEGETDSTLSNRWRIGPSVERQFTRNKSKLQQSIIDQYNGPWDASNTTALLESVADIELENAKSKLALINADAGANENDKVLITKQIKTFENLKKISPQLINDKSKSIMNVQELFKPRLYIPDLDPLNVIQHTESENYFIDFEGSTIKPFILTSYPKFVAYQGAKIYNLEEDVPGYKEMEELEKQQYDFMYYKTRNERMWELELNKYRHDLIAVASPHIKVLKSPYLQALDIKNGKDYLYVEGSIVQLQAMWEAYVANELVNSKDTKFPIEYTAEYLDQHQQELSDYQLETVSSPFSATGGWIPQDMFDTLKAQGILVETKDGDYKVETEKVLENPPSPSEEK.

The transit peptide at 1 to 34 (MLSRVARYSRTLNQLTRTSQGGLLSAVLRTSIRQ) directs the protein to the mitochondrion.

It belongs to the AIM9 family.

It is found in the mitochondrion. In Candida dubliniensis (strain CD36 / ATCC MYA-646 / CBS 7987 / NCPF 3949 / NRRL Y-17841) (Yeast), this protein is Altered inheritance of mitochondria protein 9, mitochondrial (AIM9).